Here is a 1054-residue protein sequence, read N- to C-terminus: SMC5-SMC6 complex localization factor protein 1 (1054 aa).

BRCT domains follow at residues 2 to 80 (EDSA…AKSG) and 121 to 199 (PGAF…LLEK). Residues 283 to 303 (RHGLENQKETKKKDKNIQRSY) form a disordered region. Residues 284–299 (HGLENQKETKKKDKNI) are compositionally biased toward basic and acidic residues. The tract at residues 407 to 1054 (PRGILNLIEN…MMCQSITELS (648 aa)) is NSE5-like domain; mediates interaction with SLF2. ANK repeat units follow at residues 802–832 (KGET…DINV), 836–865 (AGWT…EVDL), and 870–900 (DGVT…ELLQ).

In terms of assembly, interacts (via BRCT domains) with RAD18 (via C-terminus and phosphorylated form); this interaction is required for efficient repair of UV-induced DNA damage. Interacts (via N-terminus) with SLF2; this interaction links RAD18 to the SMC5-SMC6 complex. Interacts (via BRCT domains) with RAD18; this interaction occurs in a SLF2-independent manner. Interacts with SMC6. Widely expressed. Expressed in testis. Expressed in spermatocytes.

Its subcellular location is the nucleus. The protein localises to the cytoplasm. The protein resides in the cytoskeleton. It localises to the microtubule organizing center. It is found in the centrosome. Plays a role in the DNA damage response (DDR) pathway by regulating postreplication repair of UV-damaged DNA and genomic stability maintenance. The SLF1-SLF2 complex acts to link RAD18 with the SMC5-SMC6 complex at replication-coupled interstrand cross-links (ICL) and DNA double-strand breaks (DSBs) sites on chromatin during DNA repair in response to stalled replication forks. Promotes the recruitment of SLF2 and the SMC5-SMC6 complex to DNA lesions. This Mus musculus (Mouse) protein is SMC5-SMC6 complex localization factor protein 1.